Here is a 311-residue protein sequence, read N- to C-terminus: CAAX prenyl protease 2 (311 aa).

Helical transmembrane passes span 14–34 (VATC…PTVI), 51–71 (FICA…ILPI), and 94–114 (VVYP…LKLF). Glutamate 164 functions as the Proton donor/acceptor in the catalytic mechanism. A helical transmembrane segment spans residues 173 to 193 (IPLLLCAGFRINTAIFLCPVL). Histidine 198 serves as the catalytic Proton donor/acceptor. 3 consecutive transmembrane segments (helical) span residues 219–239 (IVGL…FLFI), 244–264 (LAAP…VLYA), and 268–288 (GLVS…LFPL).

Belongs to the peptidase U48 family. In terms of tissue distribution, expressed in seeds, stems, leaves, flowers and siliques.

The protein resides in the endoplasmic reticulum membrane. It catalyses the reaction Hydrolyzes the peptide bond -P2-(S-farnesyl or geranylgeranyl)C-P1'-P2'-P3'-COOH where P1' and P2' are amino acids with aliphatic sidechains and P3' is any C-terminal residue.. With respect to regulation, inhibited in vitro by L-1-tosylamido-2-phenylethyl chloromethyl ketone (TPCK) and N-ethylmaleimide, but not by EDTA. Functionally, protease involved in the processing of a variety of prenylated proteins containing the C-terminal CAAX motif, where C is a cysteine modified with an isoprenoid lipid, A is an aliphatic amino acid and X is any C-terminal amino acid. Proteolytically removes the C-terminal three residues of farnesylated and geranylated proteins, leaving the prenylated cysteine as the new C-terminus. The substrate specificity is only partially overlapping with that of FACE1. CAAX processing is likely required for subcellular targeting of prenylated proteins to the plasma membrane. The chain is CAAX prenyl protease 2 (FACE2) from Arabidopsis thaliana (Mouse-ear cress).